The primary structure comprises 163 residues: NADH-quinone oxidoreductase subunit I (163 aa).

2 consecutive 4Fe-4S ferredoxin-type domains span residues 55–84 (RRYPSGEERCIACKLCEAICPAQAITIEAE) and 94–123 (TRYDIDMVKCIYCGLCQEACPVDAIVEGPN). [4Fe-4S] cluster contacts are provided by Cys-64, Cys-67, Cys-70, Cys-74, Cys-103, Cys-106, Cys-109, and Cys-113.

This sequence belongs to the complex I 23 kDa subunit family. As to quaternary structure, NDH-1 is composed of 14 different subunits. Subunits NuoA, H, J, K, L, M, N constitute the membrane sector of the complex. [4Fe-4S] cluster serves as cofactor.

The protein resides in the cell inner membrane. It carries out the reaction a quinone + NADH + 5 H(+)(in) = a quinol + NAD(+) + 4 H(+)(out). NDH-1 shuttles electrons from NADH, via FMN and iron-sulfur (Fe-S) centers, to quinones in the respiratory chain. The immediate electron acceptor for the enzyme in this species is believed to be ubiquinone. Couples the redox reaction to proton translocation (for every two electrons transferred, four hydrogen ions are translocated across the cytoplasmic membrane), and thus conserves the redox energy in a proton gradient. The polypeptide is NADH-quinone oxidoreductase subunit I (Caulobacter vibrioides (strain ATCC 19089 / CIP 103742 / CB 15) (Caulobacter crescentus)).